The chain runs to 65 residues: Prokaryotic ubiquitin-like protein Pup (65 aa).

Residues 1-38 form a disordered region; sequence MANAQQQVFGGGGGDDAENNDAPQQGSGTQQVNVTGTD. The tract at residues 21–59 is ARC ATPase binding; it reads DAPQQGSGTQQVNVTGTDDLLDEIDGLLETNAEEFVRSY. Polar residues predominate over residues 22-34; sequence APQQGSGTQQVNV. At Gln65 the chain carries Deamidated glutamine. Gln65 participates in a covalent cross-link: Isoglutamyl lysine isopeptide (Gln-Lys) (interchain with K-? in acceptor proteins).

This sequence belongs to the prokaryotic ubiquitin-like protein family. In terms of assembly, strongly interacts with the proteasome-associated ATPase ARC through a hydrophobic interface; the interacting region of Pup lies in its C-terminal half. There is one Pup binding site per ARC hexamer ring. In terms of processing, is modified by deamidation of its C-terminal glutamine to glutamate by the deamidase Dop, a prerequisite to the subsequent pupylation process.

The protein operates within protein degradation; proteasomal Pup-dependent pathway. Protein modifier that is covalently attached to lysine residues of substrate proteins, thereby targeting them for proteasomal degradation. The tagging system is termed pupylation. The chain is Prokaryotic ubiquitin-like protein Pup from Corynebacterium urealyticum (strain ATCC 43042 / DSM 7109).